The chain runs to 204 residues: Tumor necrosis factor receptor superfamily member 26 (204 aa).

An N-terminal signal peptide occupies residues Met1 to Cys19. Residues Ser20–Leu164 are Extracellular-facing. Disulfide bonds link Cys27/Cys38, Cys39/Cys52, Cys42/Cys61, Cys64/Cys79, Cys82/Cys95, Cys85/Cys103, Cys105/Cys120, Cys123/Cys135, and Cys126/Cys143. TNFR-Cys repeat units follow at residues Cys27–Cys61, Pro63–Cys103, and Gln104–Cys143. A glycan (N-linked (GlcNAc...) asparagine) is linked at Asn57. Asn136 carries N-linked (GlcNAc...) asparagine glycosylation. A helical membrane pass occupies residues Gly165–Leu185. Residues Lys186–Leu204 lie on the Cytoplasmic side of the membrane.

Expressed in thymus and spleen. Detectable levels in lung.

It localises to the membrane. The sequence is that of Tumor necrosis factor receptor superfamily member 26 (Tnfrsf26) from Mus musculus (Mouse).